Here is a 555-residue protein sequence, read N- to C-terminus: Urocanate hydratase (555 aa).

NAD(+)-binding positions include 52 to 53, Gln130, 176 to 178, Glu196, Arg201, 242 to 243, 263 to 267, 273 to 274, and Tyr322; these read GG, GMG, NA, QTSAH, and YL. Residue Cys410 is part of the active site. Gly492 contacts NAD(+).

It belongs to the urocanase family. NAD(+) is required as a cofactor.

The protein localises to the cytoplasm. The enzyme catalyses 4-imidazolone-5-propanoate = trans-urocanate + H2O. It functions in the pathway amino-acid degradation; L-histidine degradation into L-glutamate; N-formimidoyl-L-glutamate from L-histidine: step 2/3. Its function is as follows. Catalyzes the conversion of urocanate to 4-imidazolone-5-propionate. The chain is Urocanate hydratase from Shewanella sp. (strain W3-18-1).